We begin with the raw amino-acid sequence, 532 residues long: Nitrogenase molybdenum-iron protein alpha chain (532 aa).

[8Fe-7S] cluster is bound by residues Cys-62, Cys-88, and Cys-153. The [7Fe-Mo-9S-C-homocitryl] cluster site is built by Cys-271 and His-489.

Belongs to the NifD/NifK/NifE/NifN family. As to quaternary structure, tetramer of two alpha and two beta chains. Forms complex with the iron protein (nitrogenase component 2). [8Fe-7S] cluster serves as cofactor. Requires [7Fe-Mo-9S-C-homocitryl] cluster as cofactor.

The enzyme catalyses N2 + 8 reduced [2Fe-2S]-[ferredoxin] + 16 ATP + 16 H2O = H2 + 8 oxidized [2Fe-2S]-[ferredoxin] + 2 NH4(+) + 16 ADP + 16 phosphate + 6 H(+). Its function is as follows. This molybdenum-iron protein is part of the nitrogenase complex that catalyzes the key enzymatic reactions in nitrogen fixation. This chain is Nitrogenase molybdenum-iron protein alpha chain (nifD2), found in Methanosarcina barkeri.